The primary structure comprises 323 residues: Secreted frizzled-related protein 3 (323 aa).

The first 32 residues, 1 to 32 (MVCCGPGRMLLGWAGLLVLAALCLLQVPGAQA), serve as a signal peptide directing secretion. Residues 33-150 (AACEPVRIPL…VYDRGVCISP (118 aa)) enclose the FZ domain. Intrachain disulfides connect cysteine 35-cysteine 96, cysteine 43-cysteine 89, cysteine 80-cysteine 119, cysteine 108-cysteine 147, and cysteine 112-cysteine 136. Residue asparagine 49 is glycosylated (N-linked (GlcNAc...) asparagine). The NTR domain maps to 178–298 (CKCKPVRATQ…WDMKLRHLGL (121 aa)). A disordered region spans residues 299 to 323 (GKTDASDSTQNQKSGRNSNPRPARS). The segment covering 304–323 (SDSTQNQKSGRNSNPRPARS) has biased composition (polar residues).

This sequence belongs to the secreted frizzled-related protein (sFRP) family. As to quaternary structure, interacts with MYOC. As to expression, expressed in kidney, brain, testis. Weak expression in spleen and heart.

Its subcellular location is the secreted. Soluble frizzled-related proteins (sFRPS) function as modulators of Wnt signaling through direct interaction with Wnts. They have a role in regulating cell growth and differentiation in specific cell types. SFRP3/FRZB appears to be involved in limb skeletogenesis. Antagonist of Wnt8 signaling. Regulates chondrocyte maturation and long bone development. The sequence is that of Secreted frizzled-related protein 3 (Frzb) from Mus musculus (Mouse).